We begin with the raw amino-acid sequence, 510 residues long: NAD(P)H-quinone oxidoreductase subunit 2, chloroplastic (510 aa).

13 helical membrane-spanning segments follow: residues 28–48 (DGSF…LLII), 57–77 (IPWL…TLLF), 99–119 (IFQF…VEYI), 124–144 (MALT…MFLC), 149–169 (LITI…LSGY), 183–203 (YLLM…WLYG), 227–247 (PGIS…LSPA), 295–315 (WHLL…LIAI), 323–343 (MLAY…IVGD), 354–374 (YMLF…LFGL), 395–415 (ALSL…AGFF), 418–438 (LYLF…IGLL), and 484–504 (MIVC…IIAI).

It belongs to the complex I subunit 2 family. In terms of assembly, NDH is composed of at least 16 different subunits, 5 of which are encoded in the nucleus.

The protein resides in the plastid. Its subcellular location is the chloroplast thylakoid membrane. The enzyme catalyses a plastoquinone + NADH + (n+1) H(+)(in) = a plastoquinol + NAD(+) + n H(+)(out). It catalyses the reaction a plastoquinone + NADPH + (n+1) H(+)(in) = a plastoquinol + NADP(+) + n H(+)(out). In terms of biological role, NDH shuttles electrons from NAD(P)H:plastoquinone, via FMN and iron-sulfur (Fe-S) centers, to quinones in the photosynthetic chain and possibly in a chloroplast respiratory chain. The immediate electron acceptor for the enzyme in this species is believed to be plastoquinone. Couples the redox reaction to proton translocation, and thus conserves the redox energy in a proton gradient. In Silene latifolia (White campion), this protein is NAD(P)H-quinone oxidoreductase subunit 2, chloroplastic.